Consider the following 689-residue polypeptide: DNA ligase (689 aa).

NAD(+) contacts are provided by residues 40 to 44 (DAEYD), 89 to 90 (SL), and E121. The active-site N6-AMP-lysine intermediate is the K123. NAD(+)-binding residues include R144, E179, K295, and K319. The Zn(2+) site is built by C413, C416, C431, and C437. The BRCT domain maps to 610–689 (REQSSLTGKI…AEWLTLVRDI (80 aa)).

Belongs to the NAD-dependent DNA ligase family. LigA subfamily. It depends on Mg(2+) as a cofactor. Mn(2+) is required as a cofactor.

The catalysed reaction is NAD(+) + (deoxyribonucleotide)n-3'-hydroxyl + 5'-phospho-(deoxyribonucleotide)m = (deoxyribonucleotide)n+m + AMP + beta-nicotinamide D-nucleotide.. Its function is as follows. DNA ligase that catalyzes the formation of phosphodiester linkages between 5'-phosphoryl and 3'-hydroxyl groups in double-stranded DNA using NAD as a coenzyme and as the energy source for the reaction. It is essential for DNA replication and repair of damaged DNA. In Rickettsia bellii (strain RML369-C), this protein is DNA ligase.